The primary structure comprises 373 residues: tRNA-specific 2-thiouridylase MnmA (373 aa).

Residues 12 to 19 and methionine 38 each bind ATP; that span reads GMSGGVDS. Residues 98–100 form an interaction with target base in tRNA region; sequence NPD. The active-site Nucleophile is cysteine 103. A disulfide bond links cysteine 103 and cysteine 200. Glycine 127 is an ATP binding site. The interaction with tRNA stretch occupies residues 150–152; it reads KDQ. Residue cysteine 200 is the Cysteine persulfide intermediate of the active site. The tract at residues 312-313 is interaction with tRNA; that stretch reads RY.

This sequence belongs to the MnmA/TRMU family.

The protein resides in the cytoplasm. It carries out the reaction S-sulfanyl-L-cysteinyl-[protein] + uridine(34) in tRNA + AH2 + ATP = 2-thiouridine(34) in tRNA + L-cysteinyl-[protein] + A + AMP + diphosphate + H(+). In terms of biological role, catalyzes the 2-thiolation of uridine at the wobble position (U34) of tRNA, leading to the formation of s(2)U34. This chain is tRNA-specific 2-thiouridylase MnmA, found in Streptococcus pyogenes serotype M6 (strain ATCC BAA-946 / MGAS10394).